The sequence spans 495 residues: Glutamate--tRNA ligase (495 aa).

Residues 12 to 22 (PSPTGHLHIGN) carry the 'HIGH' region motif. The 'KMSKS' region motif lies at 259–263 (KLSKR). Lysine 262 provides a ligand contact to ATP.

This sequence belongs to the class-I aminoacyl-tRNA synthetase family. Glutamate--tRNA ligase type 1 subfamily. Monomer.

It is found in the cytoplasm. The enzyme catalyses tRNA(Glu) + L-glutamate + ATP = L-glutamyl-tRNA(Glu) + AMP + diphosphate. Functionally, catalyzes the attachment of glutamate to tRNA(Glu) in a two-step reaction: glutamate is first activated by ATP to form Glu-AMP and then transferred to the acceptor end of tRNA(Glu). The sequence is that of Glutamate--tRNA ligase from Pediococcus pentosaceus (strain ATCC 25745 / CCUG 21536 / LMG 10740 / 183-1w).